Here is a 336-residue protein sequence, read N- to C-terminus: Dihydroorotate dehydrogenase (quinone) (336 aa).

Residues 62–66 (AGLDK) and threonine 86 contribute to the FMN site. Lysine 66 serves as a coordination point for substrate. 111-115 (NRMGF) contacts substrate. The FMN site is built by asparagine 139 and asparagine 172. Residue asparagine 172 participates in substrate binding. Serine 175 (nucleophile) is an active-site residue. Position 177 (asparagine 177) interacts with substrate. FMN contacts are provided by lysine 217 and threonine 245. 246 to 247 (NT) serves as a coordination point for substrate. FMN is bound by residues glycine 268, glycine 297, and 318 to 319 (YS).

The protein belongs to the dihydroorotate dehydrogenase family. Type 2 subfamily. Monomer. Requires FMN as cofactor.

It localises to the cell membrane. The catalysed reaction is (S)-dihydroorotate + a quinone = orotate + a quinol. It participates in pyrimidine metabolism; UMP biosynthesis via de novo pathway; orotate from (S)-dihydroorotate (quinone route): step 1/1. Functionally, catalyzes the conversion of dihydroorotate to orotate with quinone as electron acceptor. The polypeptide is Dihydroorotate dehydrogenase (quinone) (Sodalis glossinidius (strain morsitans)).